The following is a 404-amino-acid chain: Magnesium transporter NIPA4 (404 aa).

At 1 to 55 the chain is on the extracellular side; sequence MELRVSNTSCENGSLLHLYCSSQEVLCQIVNDLSPEVPSNATFHSWQERIRQNYG. N-linked (GlcNAc...) asparagine glycosylation is found at N7, N12, and N40. A helical transmembrane segment spans residues 56 to 76; it reads FYIGLGLAFLSSFLIGSSVIL. The Cytoplasmic portion of the chain corresponds to 77-102; it reads KKKGLLRLVATGATRAVDGGFGYLKD. The helical transmembrane segment at 103-123 threads the bilayer; it reads AMWWAGFLTMAAGEVANFGAY. Residue A124 is a topological domain, extracellular. Residues 125–145 traverse the membrane as a helical segment; the sequence is FAPATVVTPLGALSVLISAIL. The Cytoplasmic portion of the chain corresponds to 146–153; that stretch reads SSYFLRES. A helical membrane pass occupies residues 154 to 174; that stretch reads LNLLGKLGCVICVAGSTVMVI. The Extracellular segment spans residues 175–195; it reads HAPEEEKVTTIMEMASKMKDT. A helical transmembrane segment spans residues 196 to 216; the sequence is GFIVFAVLLLVSCLILIFVIA. Over 217–223 the chain is Cytoplasmic; that stretch reads PRYGQRN. A helical membrane pass occupies residues 224–244; sequence ILIYIIICSVIGAFSVAAVKG. Residues 245-261 lie on the Extracellular side of the membrane; sequence LGITIKNFFQGLPVVRH. Residues 262–282 traverse the membrane as a helical segment; that stretch reads PLPYILSLILALSLSTQVNFL. The Cytoplasmic segment spans residues 283 to 293; sequence NRALDIFNTSL. A helical transmembrane segment spans residues 294–314; that stretch reads VFPIYYVFFTTVVVTSSIILF. Residues 315–324 lie on the Extracellular side of the membrane; sequence KEWYSMSAVD. A helical membrane pass occupies residues 325 to 345; the sequence is IAGTLSGFVTIILGVFMLHAF. Residues 346–404 are Cytoplasmic-facing; sequence KDLDISCASLPHMHKNPPPSPAPEPTVIRLEDKNVLVDNIELASTSSPEEKPKVFIIHS.

Belongs to the NIPA family. Highly expressed in brain, lung, stomach, keratinocytes and leukocytes, and in all other tissues tested except liver, thyroid and fetal brain.

It localises to the cell membrane. The enzyme catalyses Mg(2+)(in) = Mg(2+)(out). Functionally, acts as a Mg(2+) transporter. Can also transport other divalent cations such as Ba(2+), Sr(2+) and Fe(2+) but to a much less extent than Mg(2+). May be a receptor for ligands (trioxilins A3 and B3) from the hepoxilin pathway. The protein is Magnesium transporter NIPA4 (NIPAL4) of Homo sapiens (Human).